A 276-amino-acid polypeptide reads, in one-letter code: Proteasome subunit beta type-8 (276 aa).

The propeptide at 1 to 72 is removed in mature form; sequence MALLEVCGAP…KNIRKEMVHG (72 aa). The active-site Nucleophile is the Thr73.

This sequence belongs to the peptidase T1B family. As to quaternary structure, the 26S proteasome consists of a 20S proteasome core and two 19S regulatory subunits. The 20S proteasome core is composed of 28 subunits that are arranged in four stacked rings, resulting in a barrel-shaped structure. The two end rings are each formed by seven alpha subunits, and the two central rings are each formed by seven beta subunits. The catalytic chamber with the active sites is on the inside of the barrel. Component of the immunoproteasome, where it displaces the equivalent housekeeping subunit PSMB5. Component of the spermatoproteasome, a form of the proteasome specifically found in testis. Directly interacts with POMP. In terms of processing, autocleaved. The resulting N-terminal Thr residue of the mature subunit is responsible for the nucleophile proteolytic activity.

It localises to the cytoplasm. The protein resides in the nucleus. It catalyses the reaction Cleavage of peptide bonds with very broad specificity.. Functionally, the proteasome is a multicatalytic proteinase complex which is characterized by its ability to cleave peptides with Arg, Phe, Tyr, Leu, and Glu adjacent to the leaving group at neutral or slightly basic pH. The proteasome has an ATP-dependent proteolytic activity. This subunit is involved in antigen processing to generate class I binding peptides. May participate in the generation of spliced peptides resulting from the ligation of two separate proteasomal cleavage products that are not contiguous in the parental protein. Required for adipocyte differentiation. This is Proteasome subunit beta type-8 (PSMB8) from Canis lupus familiaris (Dog).